We begin with the raw amino-acid sequence, 618 residues long: MNPIRSVKEEFCEIVANGLGISKDVIFKTLEYPPREELGDISLPLPSLKLNVRTEVTFSHGKLIKEVRKTGIYVNAFVDEKELFKLLFTEMQDDYGVEKTENPKRIVVEHTSANPIHPLHIGHLRNSILGDTISRMLKIRGHDVNRRFYVNDAGRQVAILTLGYILLGEPEPSPKVDHWFGLIYSITNVIIEIRELKEELKKDLDPDTYKDKINRLDELVATAQSLRERNPEFFDKLADAINSIPDVESEIQKIIKSYEKGDDPKIKQIVRKIVNLNLDGFRESLDKLEISFDVYDYESELLWSGMVDEILSKAFQIAKDYKGTKALELEDINEKIKEILNIPKGLKLPPLVLTRSDGTSLYTTRDIAYTVKKFSDFKADTVINVIAEQQSIPQMQLRASLYLLGYERLAQNLVHYSYGMVNLQGMRMSGRLGRFISLDDVIEKVSEVAKKKIEEKSGDITNLRDIVNSAIRYAILSVASNKPVTFNINNIVDFEQNSGPYLQYTYARAYNILAKNQDEIKLTDADLSDLIGDKRRLLLLIARFPETFNKAIDELRPEDLIDFLRRTADVFNRWYNFERVLQEPDYRKRITRLFIVKGIERVLYNGLNALGIKPLSKM.

The 'HIGH' region signature appears at 113-123 (ANPIHPLHIGH).

The protein belongs to the class-I aminoacyl-tRNA synthetase family.

The protein localises to the cytoplasm. It catalyses the reaction tRNA(Arg) + L-arginine + ATP = L-arginyl-tRNA(Arg) + AMP + diphosphate. This Sulfolobus acidocaldarius (strain ATCC 33909 / DSM 639 / JCM 8929 / NBRC 15157 / NCIMB 11770) protein is Arginine--tRNA ligase.